A 914-amino-acid polypeptide reads, in one-letter code: Chitin synthase B (914 aa).

Disordered stretches follow at residues 1-67 and 112-140; these read MAYQ…TSGY and YARS…GGGL. Residues 130-140 are compositionally biased toward gly residues; sequence GGAGSGGGGGL. The next 7 helical transmembrane spans lie at 543–562, 586–606, 627–647, 662–682, 712–732, 843–863, and 882–902; these read WLNG…GRMY, ILTW…MDLV, IVNT…FILA, SFVV…YLVV, AGII…ASFM, LVTF…SDGV, and ALLW…CWFL.

This sequence belongs to the chitin synthase family. Class III subfamily.

Its subcellular location is the cell membrane. It catalyses the reaction [(1-&gt;4)-N-acetyl-beta-D-glucosaminyl](n) + UDP-N-acetyl-alpha-D-glucosamine = [(1-&gt;4)-N-acetyl-beta-D-glucosaminyl](n+1) + UDP + H(+). Its function is as follows. Polymerizes chitin, a structural polymer of the cell wall and septum, by transferring the sugar moiety of UDP-GlcNAc to the non-reducing end of the growing chitin polymer. Plays an important role in septal growth or maintenance. Mediates colony spore formation. The chain is Chitin synthase B from Aspergillus niger (strain ATCC MYA-4892 / CBS 513.88 / FGSC A1513).